Reading from the N-terminus, the 393-residue chain is Methylthioribose-1-phosphate isomerase (393 aa).

The active-site Proton donor is Asp265.

The protein belongs to the eIF-2B alpha/beta/delta subunits family. MtnA subfamily.

The protein localises to the cytoplasm. The protein resides in the nucleus. It carries out the reaction 5-(methylsulfanyl)-alpha-D-ribose 1-phosphate = 5-(methylsulfanyl)-D-ribulose 1-phosphate. It functions in the pathway amino-acid biosynthesis; L-methionine biosynthesis via salvage pathway; L-methionine from S-methyl-5-thio-alpha-D-ribose 1-phosphate: step 1/6. Catalyzes the interconversion of methylthioribose-1-phosphate (MTR-1-P) into methylthioribulose-1-phosphate (MTRu-1-P). In Cryptococcus neoformans var. neoformans serotype D (strain B-3501A) (Filobasidiella neoformans), this protein is Methylthioribose-1-phosphate isomerase.